The chain runs to 447 residues: GTPase Der (447 aa).

EngA-type G domains follow at residues 3–167 and 180–353; these read PVIA…ALPE and IRLA…KSAN. Residues 9 to 16, 56 to 60, 119 to 122, 186 to 193, 233 to 237, and 298 to 301 contribute to the GTP site; these read GRPNVGKS, DTGGF, NKAE, DTAGL, and NKWD. A KH-like domain is found at 354–438; the sequence is RKMPTPVLTR…PLRIEMKTSS (85 aa).

This sequence belongs to the TRAFAC class TrmE-Era-EngA-EngB-Septin-like GTPase superfamily. EngA (Der) GTPase family. Associates with the 50S ribosomal subunit.

GTPase that plays an essential role in the late steps of ribosome biogenesis. The chain is GTPase Der from Acidovorax ebreus (strain TPSY) (Diaphorobacter sp. (strain TPSY)).